A 290-amino-acid polypeptide reads, in one-letter code: GTPase Era (290 aa).

Residues 2–169 (KSGFAAILGR…KNKIYENFSE (168 aa)) form the Era-type G domain. The interval 10–17 (GRPSTGKS) is G1. 10–17 (GRPSTGKS) provides a ligand contact to GTP. The G2 stretch occupies residues 36-40 (QTTRN). The segment at 57–60 (DTPG) is G3. GTP-binding positions include 57–61 (DTPGF) and 119–122 (NKID). The segment at 119-122 (NKID) is G4. A G5 region spans residues 148-150 (ISA). The KH type-2 domain occupies 200 to 276 (LKEELPYSLY…NLFLQVKLKK (77 aa)).

The protein belongs to the TRAFAC class TrmE-Era-EngA-EngB-Septin-like GTPase superfamily. Era GTPase family. In terms of assembly, monomer.

The protein resides in the cytoplasm. It localises to the cell inner membrane. In terms of biological role, an essential GTPase that binds both GDP and GTP, with rapid nucleotide exchange. Plays a role in 16S rRNA processing and 30S ribosomal subunit biogenesis and possibly also in cell cycle regulation and energy metabolism. The protein is GTPase Era of Borreliella burgdorferi (strain ATCC 35210 / DSM 4680 / CIP 102532 / B31) (Borrelia burgdorferi).